We begin with the raw amino-acid sequence, 407 residues long: Argininosuccinate synthase (407 aa).

ATP contacts are provided by residues 13–21 and A40; that span reads AYSGGLDTS. 2 residues coordinate L-citrulline: Y91 and S96. Residue G121 participates in ATP binding. The L-aspartate site is built by T123, N127, and D128. N127 is a binding site for L-citrulline. R131, S182, S191, E267, and Y279 together coordinate L-citrulline.

Belongs to the argininosuccinate synthase family. Type 1 subfamily. In terms of assembly, homotetramer.

The protein localises to the cytoplasm. The enzyme catalyses L-citrulline + L-aspartate + ATP = 2-(N(omega)-L-arginino)succinate + AMP + diphosphate + H(+). It functions in the pathway amino-acid biosynthesis; L-arginine biosynthesis; L-arginine from L-ornithine and carbamoyl phosphate: step 2/3. In Mesorhizobium japonicum (strain LMG 29417 / CECT 9101 / MAFF 303099) (Mesorhizobium loti (strain MAFF 303099)), this protein is Argininosuccinate synthase.